Reading from the N-terminus, the 351-residue chain is 2-Hydroxyacid oxidase 2 (351 aa).

The region spanning 2 to 351 (SLVCLTDFQA…NRNLVQFSRL (350 aa)) is the FMN hydroxy acid dehydrogenase domain. Residues 77–79 (PTG), Ser106, and Gln128 contribute to the FMN site. Tyr130 is a binding site for a 2-oxocarboxylate. Residue Thr156 coordinates FMN. Arg165 lines the a 2-oxocarboxylate pocket. Position 178 is a phosphothreonine (Thr178). Residue Lys222 coordinates FMN. Catalysis depends on His246, which acts as the Proton acceptor. Arg249 provides a ligand contact to a 2-oxocarboxylate. Residues 277-281 (DGGVR) and 300-301 (GR) contribute to the FMN site. The Microbody targeting signal motif lies at 349–351 (SRL).

The protein belongs to the FMN-dependent alpha-hydroxy acid dehydrogenase family. As to quaternary structure, homotetramer. It depends on FMN as a cofactor. As to expression, expressed in the liver and kidney.

It is found in the peroxisome. The enzyme catalyses a (2S)-2-hydroxycarboxylate + O2 = a 2-oxocarboxylate + H2O2. It carries out the reaction 2-hydroxyhexadecanoate + O2 = 2-oxohexadecanoate + H2O2. The catalysed reaction is 2-hydroxyoctanoate + O2 = 2-oxooctanoate + H2O2. The protein operates within lipid metabolism; fatty acid metabolism. Oxidase that catalyzes the oxidation of medium and long chain hydroxyacids such as 2-hydroxyhexadecanoate and 2-hydroxyoctanoate, to the correspondong 2-oxoacids. Its role in the oxidation of 2-hydroxy fatty acids may contribute to the general pathway of fatty acid alpha-oxidation. Active in vitro with the artificial electron acceptor 2,6-dichlorophenolindophenol (DCIP), but O2 is believed to be the physiological electron acceptor, leading to the production of H2O2. Is not active on glycolate, glyoxylate, L-lactate and 2-hydroxybutanoate. This is 2-Hydroxyacid oxidase 2 (HAO2) from Homo sapiens (Human).